We begin with the raw amino-acid sequence, 511 residues long: Lysine--tRNA ligase (511 aa).

Residues 1–20 form a disordered region; sequence MQKNTSQPTNTNEQSNQPSL. The Mg(2+) site is built by glutamate 422 and glutamate 429.

This sequence belongs to the class-II aminoacyl-tRNA synthetase family. In terms of assembly, homodimer. The cofactor is Mg(2+).

It localises to the cytoplasm. It carries out the reaction tRNA(Lys) + L-lysine + ATP = L-lysyl-tRNA(Lys) + AMP + diphosphate. The chain is Lysine--tRNA ligase from Chlorobium chlorochromatii (strain CaD3).